Reading from the N-terminus, the 122-residue chain is Large ribosomal subunit protein uL18 (122 aa).

It belongs to the universal ribosomal protein uL18 family. In terms of assembly, part of the 50S ribosomal subunit; part of the 5S rRNA/L5/L18/L25 subcomplex. Contacts the 5S and 23S rRNAs.

Its function is as follows. This is one of the proteins that bind and probably mediate the attachment of the 5S RNA into the large ribosomal subunit, where it forms part of the central protuberance. The chain is Large ribosomal subunit protein uL18 from Mycobacterium avium (strain 104).